Reading from the N-terminus, the 122-residue chain is Large ribosomal subunit protein uL14 (122 aa).

The protein belongs to the universal ribosomal protein uL14 family. As to quaternary structure, part of the 50S ribosomal subunit. Forms a cluster with proteins L3 and L19. In the 70S ribosome, L14 and L19 interact and together make contacts with the 16S rRNA in bridges B5 and B8.

In terms of biological role, binds to 23S rRNA. Forms part of two intersubunit bridges in the 70S ribosome. The sequence is that of Large ribosomal subunit protein uL14 from Exiguobacterium sp. (strain ATCC BAA-1283 / AT1b).